Reading from the N-terminus, the 1220-residue chain is MGDMANNSVAYSGVKNSLKEANHDGDFGITLAELRALMELRSTDALRKIQESYGDVYGICTKLKTSPNEGLSGNPADLERREAVFGKNFIPPKKPKTFLQLVWEALQDVTLIILEIAAIVSLGLSFYQPPEGDNALCGEVSVGEEEGEGETGWIEGAAILLSVVCVVLVTAFNDWSKEKQFRGLQSRIEQEQKFTVIRGGQVIQIPVADITVGDIAQVKYGDLLPADGILIQGNDLKIDESSLTGESDHVKKSLDKDPLLLSGTHVMEGSGRMVVTAVGVNSQTGIIFTLLGAGGEEEEKKDEKKKEKKNKKQDGAIENRNKAKAQDGAAMEMQPLKSEEGGDGDEKDKKKANLPKKEKSVLQGKLTKLAVQIGKAGLLMSAITVIILVLYFVIDTFWVQKRPWLAECTPIYIQYFVKFFIIGVTVLVVAVPEGLPLAVTISLAYSVKKMMKDNNLVRHLDACETMGNATAICSDKTGTLTMNRMTVVQAYINEKHYKKVPEPEAIPPNILSYLVTGISVNCAYTSKILPPEKEGGLPRHVGNKTECALLGFLLDLKRDYQDVRNEIPEEALYKVYTFNSVRKSMSTVLKNSDGSFRIFSKGASEIILKKCFKILSANGEAKVFRPRDRDDIVKTVIEPMASEGLRTICLAFRDFPAGEPEPEWDNENDVVTGLTCIAVVGIEDPVRPEVPEAIKKCQRAGITVRMVTGDNINTARAIATKCGILHPGEDFLCLEGKDFNRRIRNEKGEIEQERIDKIWPKLRVLARSSPTDKHTLVKGIIDSTVSEQRQVVAVTGDGTNDGPALKKADVGFAMGIAGTDVAKEASDIILTDDNFTSIVKAVMWGRNVYDSISKFLQFQLTVNVVAVIVAFTGACITQDSPLKAVQMLWVNLIMDTLASLALATEPPTESLLLRKPYGRNKPLISRTMMKNILGHAFYQLVVVFTLLFAGEKFFDIDSGRNAPLHAPPSEHYTIVFNTFVLMQLFNEINARKIHGERNVFEGIFNNAIFCTIVLGTFVVQIIIVQFGGKPFSCSELSIEQWLWSIFLGMGTLLWGQLISTIPTSRLKFLKEAGHGTQKEEIPEEELAEDVEEIDHAERELRRGQILWFRGLNRIQTQIRVVNAFRSSLYEGLEKPESRSSIHNFMTHPEFRIEDSEPLIPLIDDTDAEDDAPTKRNSSPPPSPNKNNNAVDSGIHLTIEMNKSATSSSPGSPLHSLETSL.

Position 2 is an N-acetylglycine (glycine 2). The Cytoplasmic segment spans residues 2-105; it reads GDMANNSVAY…KTFLQLVWEA (104 aa). A phosphoserine mark is found at serine 8 and serine 17. Residues 106–126 form a helical membrane-spanning segment; sequence LQDVTLIILEIAAIVSLGLSF. At 127-154 the chain is on the extracellular side; the sequence is YQPPEGDNALCGEVSVGEEEGEGETGWI. Residues 155–175 form a helical membrane-spanning segment; sequence EGAAILLSVVCVVLVTAFNDW. At 176–366 the chain is on the cytoplasmic side; the sequence is SKEKQFRGLQ…KEKSVLQGKL (191 aa). Residues 297-356 form a disordered region; the sequence is EEEKKDEKKKEKKNKKQDGAIENRNKAKAQDGAAMEMQPLKSEEGGDGDEKDKKKANLPK. Composition is skewed to basic and acidic residues over residues 312–325 and 337–356; these read KQDG…KAKA and KSEE…NLPK. The residue at position 338 (serine 338) is a Phosphoserine. A helical transmembrane segment spans residues 367-386; that stretch reads TKLAVQIGKAGLLMSAITVI. Topologically, residues 387–418 are extracellular; it reads ILVLYFVIDTFWVQKRPWLAECTPIYIQYFVK. A helical transmembrane segment spans residues 419–439; the sequence is FFIIGVTVLVVAVPEGLPLAV. Residues 440-855 lie on the Cytoplasmic side of the membrane; sequence TISLAYSVKK…RNVYDSISKF (416 aa). The active-site 4-aspartylphosphate intermediate is aspartate 475. Residues aspartate 475, threonine 477, and aspartate 797 each contribute to the Mg(2+) site. The chain crosses the membrane as a helical span at residues 856–876; sequence LQFQLTVNVVAVIVAFTGACI. Topologically, residues 877 to 882 are extracellular; the sequence is TQDSPL. A helical transmembrane segment spans residues 883–903; the sequence is KAVQMLWVNLIMDTLASLALA. The Cytoplasmic segment spans residues 904–927; that stretch reads TEPPTESLLLRKPYGRNKPLISRT. A helical transmembrane segment spans residues 928–948; sequence MMKNILGHAFYQLVVVFTLLF. The Extracellular segment spans residues 949 to 971; it reads AGEKFFDIDSGRNAPLHAPPSEH. Residues 972 to 991 form a helical membrane-spanning segment; the sequence is YTIVFNTFVLMQLFNEINAR. At 992–1005 the chain is on the cytoplasmic side; sequence KIHGERNVFEGIFN. The helical transmembrane segment at 1006–1027 threads the bilayer; sequence NAIFCTIVLGTFVVQIIIVQFG. Topologically, residues 1028-1039 are extracellular; sequence GKPFSCSELSIE. A helical membrane pass occupies residues 1040–1060; sequence QWLWSIFLGMGTLLWGQLIST. At 1061-1220 the chain is on the cytoplasmic side; the sequence is IPTSRLKFLK…SPLHSLETSL (160 aa). The segment at 1100-1117 is calmodulin-binding subdomain A; that stretch reads LRRGQILWFRGLNRIQTQ. Threonine 1116 carries the phosphothreonine; by PKC modification. Residues 1118–1220 are required for basolateral membrane targeting; it reads IRVVNAFRSS…SPLHSLETSL (103 aa). Serine 1140 and serine 1155 each carry phosphoserine. The interval 1162–1220 is disordered; that stretch reads IDDTDAEDDAPTKRNSSPPPSPNKNNNAVDSGIHLTIEMNKSATSSSPGSPLHSLETSL. Threonine 1165 is subject to Phosphothreonine. A Phosphoserine; by PKA modification is found at serine 1177. Phosphoserine occurs at positions 1178 and 1182. Residues 1200–1220 are compositionally biased toward polar residues; that stretch reads MNKSATSSSPGSPLHSLETSL.

This sequence belongs to the cation transport ATPase (P-type) (TC 3.A.3) family. Type IIB subfamily. In terms of assembly, monomer. Dimer. Oligomer. Calmodulin binding. Interacts with PDZD11. Interacts with SLC35G1 and STIM1. Interacts with YWHAE; interacts with the monomeric and dimeric forms of the YWHAE but prefer the monomer form; this interaction inhibits calcium-transporting ATPase activity. Interacts with NPTN; this interaction stabilizes ATP2B1 and increases ATPase activity; this interaction controls T cell calcium homeostasis following T cell activation. Interacts with EPB41; regulates small intestinal calcium absorption through regulation of membrane expression of ATP2B1. Isoform B is ubiquitously expressed. Isoforms A and E have only been found in brain cortex. Isoform C is found in brain cortex, skeletal muscle and heart muscle. Isoform D has only been found in fetal skeletal muscle. Isoform K has been found in small intestine and liver. Isoform B is expressed in hair cells of inner ear.

It is found in the cell membrane. The protein localises to the basolateral cell membrane. Its subcellular location is the synapse. It localises to the presynaptic cell membrane. The protein resides in the cytoplasmic vesicle. It is found in the secretory vesicle. The protein localises to the synaptic vesicle membrane. The catalysed reaction is Ca(2+)(in) + ATP + H2O = Ca(2+)(out) + ADP + phosphate + H(+). Its function is as follows. Catalyzes the hydrolysis of ATP coupled with the transport of calcium from the cytoplasm to the extracellular space thereby maintaining intracellular calcium homeostasis. Plays a role in blood pressure regulation through regulation of intracellular calcium concentration and nitric oxide production leading to regulation of vascular smooth muscle cells vasoconstriction. Positively regulates bone mineralization through absorption of calcium from the intestine. Plays dual roles in osteoclast differentiation and survival by regulating RANKL-induced calcium oscillations in preosteoclasts and mediating calcium extrusion in mature osteoclasts. Regulates insulin sensitivity through calcium/calmodulin signaling pathway by regulating AKT1 activation and NOS3 activation in endothelial cells. May play a role in synaptic transmission by modulating calcium and proton dynamics at the synaptic vesicles. The chain is Plasma membrane calcium-transporting ATPase 1 from Rattus norvegicus (Rat).